Consider the following 1022-residue polypeptide: Histone-lysine N-methyltransferase TRX1 (1022 aa).

Positions 31–151 are disordered; that stretch reads SSAPCPLPKK…QRQGVHKEAA (121 aa). Residues 65 to 78 show a composition bias toward pro residues; it reads EGPPPSPATAPPML. Over residues 127-139 the composition is skewed to basic and acidic residues; the sequence is GGAERRGYFSEPK. The PWWP domain maps to 264-327; it reads PGDLVWAKLT…LKQAVPFLNG (64 aa). A compositionally biased stretch (basic and acidic residues) spans 367–393; the sequence is SMEKGSSDANSNKDVHSCDNLSEDKTA. The disordered stretch occupies residues 367–399; that stretch reads SMEKGSSDANSNKDVHSCDNLSEDKTAESGGDY. An FYR N-terminal domain is found at 402-461; that stretch reads MTPIELGNLRVSKLGRIVTDSDYFHNKKHIWPEGYTAFRKFRSVKDPHVVILYKMEVLRN. The FYR C-terminal domain occupies 465–548; that stretch reads KARPLFRVTS…SCLKYFENAG (84 aa). The Phorbol-ester/DAG-type zinc finger occupies 553 to 609; sequence GYRAVHVNWKDLDYCSVCDMDEEYEDNLFLQCDKCRMMVHARCYGELEPLNGVLWLC. PHD-type zinc fingers lie at residues 564-615 and 677-744; these read LDYC…CRPE and LLCS…KKHR. The tract at residues 620 to 744 is extended PHD domain (ePHD); it reads SPRCCLCPVT…RLLSYCKKHR (125 aa). The SET domain occupies 861–979; the sequence is RRLAFGKSRI…PWEELTYDYR (119 aa). Position 943 (Cys-943) interacts with Zn(2+). An S-adenosyl-L-methionine-binding site is contributed by Tyr-978. Residues 985-1001 form the Post-SET domain; that stretch reads QRLPCYCGFPKCRGVVN. 3 residues coordinate Zn(2+): Cys-989, Cys-991, and Cys-996.

Belongs to the class V-like SAM-binding methyltransferase superfamily. Histone-lysine methyltransferase family. TRX/MLL subfamily. As to quaternary structure, interacts with EHD3. As to expression, expressed in leaf blades and panicles.

It localises to the nucleus. It carries out the reaction L-lysyl(4)-[histone H3] + S-adenosyl-L-methionine = N(6)-methyl-L-lysyl(4)-[histone H3] + S-adenosyl-L-homocysteine + H(+). Possesses histone H3 methyltransferase activity in vitro. Methylates 'Lys-4' of histone H3. H3 'Lys-4' methylation represents a specific tag for epigenetic transcriptional activation. Functions as a receptor for the lipid messenger phosphatidylinositol 5-phosphate (PI5P), which negatively regulates its transcriptional activation activity. Involved in the regulation of flowering time and floral induction under long day (LD) conditions. Acts as an activator of flowering under LD conditions. May function through binding to EHD3, a repressor of GHD7. This chain is Histone-lysine N-methyltransferase TRX1, found in Oryza sativa subsp. japonica (Rice).